Consider the following 139-residue polypeptide: Histone H2AX (139 aa).

Disordered stretches follow at residues 1–21 and 119–139; these read MSGR…RSSR and KKSS…SQEY. Ser2 is modified (N-acetylserine). The residue at position 2 (Ser2) is a Phosphoserine. The segment covering 7–19 has biased composition (basic residues); that stretch reads AVSKTRAKAKTRS. The residue at position 10 (Lys10) is an N6-lactoyllysine; alternate. Glycyl lysine isopeptide (Lys-Gly) (interchain with G-Cter in ubiquitin) cross-links involve residues Lys14, Lys16, and Lys120. Phosphoserine is present on Ser136. Positions 136–137 match the [ST]-Q motif motif; the sequence is SQ. Residue Tyr139 is modified to Phosphotyrosine; by WSTF.

Belongs to the histone H2A family. In terms of assembly, the nucleosome is a histone octamer containing two molecules each of H2A, H2B, H3 and H4 assembled in one H3-H4 heterotetramer and two H2A-H2B heterodimers. The octamer wraps approximately 147 bp of DNA. Interacts with numerous proteins required for DNA damage signaling and repair when phosphorylated on Ser-136. In terms of processing, phosphorylated. Phosphorylation of Ser-136 (H2AX139ph) occurs in response to DNA double strand breaks (DSBs) generated by exogenous genotoxic agents, by stalled replication forks and by meiotic recombination events. Phosphorylation is dependent on the DNA damage checkpoint kinases ATR and ATM, spreads on either side of a detected DSB site and may mark the surrounding chromatin for recruitment of proteins required for DNA damage signaling and repair. Widespread phosphorylation may also serve to amplify the damage signal or aid repair of persistent lesions. Dephosphorylation of Ser-136 is required for DNA DSB repair. Phosphorylation at Tyr-139 (H2AXY142ph) by baz1b/wstf determines the relative recruitment of either DNA repair or pro-apoptotic factors. Phosphorylation at Tyr-139 (H2AXY142ph) favors the recruitment of pro-apoptosis factors. In contrast, dephosphorylation of Tyr-139 by EYA proteins (eya1, eya2, eya3 or eya4) favors the recruitment of MDC1-containing DNA repair complexes to the tail of phosphorylated Ser-136 (H2AX139ph). Phosphorylated by VRK1. Post-translationally, monoubiquitination of Lys-120 (H2AXK119ub) by ring1 and rnf2/ring2 complex gives a specific tag for epigenetic transcriptional repression. Following DNA double-strand breaks (DSBs), it is ubiquitinated through 'Lys-63' linkage of ubiquitin moieties by the E2 ligase ube2n and the E3 ligases rnf8 and rnf168, leading to the recruitment of repair proteins to sites of DNA damage. Ubiquitination at Lys-14 and Lys-16 (H2AK13Ub and H2AK15Ub, respectively) in response to DNA damage is initiated by rnf168 that mediates monoubiquitination at these 2 sites, and 'Lys-63'-linked ubiquitin are then conjugated to monoubiquitin; rnf8 is able to extend 'Lys-63'-linked ubiquitin chains in vitro. H2AK119Ub and ionizing radiation-induced 'Lys-63'-linked ubiquitination (H2AK13Ub and H2AK15Ub) are distinct events.

Its subcellular location is the nucleus. It localises to the chromosome. Variant histone H2A which replaces conventional H2A in a subset of nucleosomes. Nucleosomes wrap and compact DNA into chromatin, limiting DNA accessibility to the cellular machineries which require DNA as a template. Histones thereby play a central role in transcription regulation, DNA repair, DNA replication and chromosomal stability. DNA accessibility is regulated via a complex set of post-translational modifications of histones, also called histone code, and nucleosome remodeling. Required for checkpoint-mediated arrest of cell cycle progression in response to low doses of ionizing radiation and for efficient repair of DNA double strand breaks (DSBs) specifically when modified by C-terminal phosphorylation. This is Histone H2AX (h2ax) from Xenopus laevis (African clawed frog).